The chain runs to 408 residues: MWPQVIPGSKSITNRALILAALAAGPSTIHGVLRSRDTDLMADALRSMGVTITEEAPDRYHVEPPAELSSGSIDCGLAGTVMRFVPPVAAFADGPVHFDGDEQARIRPMTSILDALRTLGVRVENNRLPFTVTSDGIPEGGVVEIDASASSQFVSGLLLSAPRFVNGVTVRHIGGRLPSMPHIEMTVAMLREVGIRVDVTPNQWTVHPGEIRGHTWRIEPDLSNATPFLAAAAVTRGTVTVRNWPRDTTQPGDSIRSILEDMGCTVEFISNGATFDLEVTGPAELKGIHLDMSDIGELTPTVAALAALATTESRLTGIAHLRGHETNRLEALTAEINRLGGNCTELDDGLHITPAPLHGGVWHSYADHRMATAGAIIGLVIKDVGVEDIQTTSKTFPGFETLWEEMVG.

3-phosphoshikimate-binding residues include Lys10, Ser11, and Arg15. Lys10 provides a ligand contact to phosphoenolpyruvate. Phosphoenolpyruvate is bound by residues Gly79 and Arg107. Residues Ser150, Ser151, Gln152, Ser179, Glu297, and His324 each contribute to the 3-phosphoshikimate site. Gln152 serves as a coordination point for phosphoenolpyruvate. Glu297 functions as the Proton acceptor in the catalytic mechanism. Phosphoenolpyruvate is bound by residues Arg328, Arg369, and Lys394.

This sequence belongs to the EPSP synthase family. In terms of assembly, monomer.

The protein resides in the cytoplasm. The enzyme catalyses 3-phosphoshikimate + phosphoenolpyruvate = 5-O-(1-carboxyvinyl)-3-phosphoshikimate + phosphate. Its pathway is metabolic intermediate biosynthesis; chorismate biosynthesis; chorismate from D-erythrose 4-phosphate and phosphoenolpyruvate: step 6/7. Functionally, catalyzes the transfer of the enolpyruvyl moiety of phosphoenolpyruvate (PEP) to the 5-hydroxyl of shikimate-3-phosphate (S3P) to produce enolpyruvyl shikimate-3-phosphate and inorganic phosphate. The sequence is that of 3-phosphoshikimate 1-carboxyvinyltransferase from Corynebacterium efficiens (strain DSM 44549 / YS-314 / AJ 12310 / JCM 11189 / NBRC 100395).